Consider the following 388-residue polypeptide: S-adenosylmethionine synthase (388 aa).

H16 is an ATP binding site. D18 lines the Mg(2+) pocket. E44 lines the K(+) pocket. 2 residues coordinate L-methionine: E57 and Q100. Residues 100–110 (QSPEIAQGVDR) are flexible loop. ATP contacts are provided by residues 165–167 (DAK), 231–232 (KF), D240, 246–247 (RK), A263, and K267. L-methionine is bound at residue D240. K271 is an L-methionine binding site.

It belongs to the AdoMet synthase family. Homotetramer; dimer of dimers. Mg(2+) serves as cofactor. K(+) is required as a cofactor.

The protein localises to the cytoplasm. It catalyses the reaction L-methionine + ATP + H2O = S-adenosyl-L-methionine + phosphate + diphosphate. It participates in amino-acid biosynthesis; S-adenosyl-L-methionine biosynthesis; S-adenosyl-L-methionine from L-methionine: step 1/1. Functionally, catalyzes the formation of S-adenosylmethionine (AdoMet) from methionine and ATP. The overall synthetic reaction is composed of two sequential steps, AdoMet formation and the subsequent tripolyphosphate hydrolysis which occurs prior to release of AdoMet from the enzyme. This Psychrobacter sp. (strain PRwf-1) protein is S-adenosylmethionine synthase.